The primary structure comprises 276 residues: Rhomboid protease GlpG (276 aa).

A run of 6 helical transmembrane segments spans residues 94-114 (GPFT…QNLL), 142-162 (AFMH…WYLG), 169-189 (IGSG…GFVQ), 192-212 (FSGP…GYVW), 229-249 (LILF…GMAI), and 252-272 (GAHV…TLHG). Residue Ser-201 is the Nucleophile of the active site. His-254 is an active-site residue.

This sequence belongs to the peptidase S54 family.

The protein resides in the cell inner membrane. The catalysed reaction is Cleaves type-1 transmembrane domains using a catalytic dyad composed of serine and histidine that are contributed by different transmembrane domains.. Functionally, rhomboid-type serine protease that catalyzes intramembrane proteolysis. The chain is Rhomboid protease GlpG from Klebsiella pneumoniae (strain 342).